The primary structure comprises 336 residues: Heme A synthase (336 aa).

Transmembrane regions (helical) follow at residues 5 to 25 (LTRWLLTCCIMVVAMIIVGGI), 92 to 112 (GRATGLIYILPLIYFYFKGII), 117 to 137 (ILSYIIVLLLFCVQGFMGWYM), 153 to 173 (LAFHLIIAVIIYHLLFYKLVK), and 191 to 211 (LIFSVAAIAMIYVQIFLGALV). A heme-binding site is contributed by His-255. 3 helical membrane passes run 257–277 (LGAYSLSIIVIALIISLLKVK), 284–304 (VAFYLSIALLIQLSTGVITLL), and 307–327 (VPIIAASMHQFFAIVLLSVVI). His-315 provides a ligand contact to heme.

This sequence belongs to the COX15/CtaA family. Type 2 subfamily. As to quaternary structure, interacts with CtaB. Heme b serves as cofactor.

It is found in the cell membrane. The catalysed reaction is Fe(II)-heme o + 2 A + H2O = Fe(II)-heme a + 2 AH2. It functions in the pathway porphyrin-containing compound metabolism; heme A biosynthesis; heme A from heme O: step 1/1. Its function is as follows. Catalyzes the conversion of heme O to heme A by two successive hydroxylations of the methyl group at C8. The first hydroxylation forms heme I, the second hydroxylation results in an unstable dihydroxymethyl group, which spontaneously dehydrates, resulting in the formyl group of heme A. This chain is Heme A synthase, found in Rickettsia bellii (strain OSU 85-389).